Reading from the N-terminus, the 485-residue chain is Amino acid permease 1 (485 aa).

Polar residues predominate over residues 1 to 15 (MKSFNTEGHNHSTAE). The tract at residues 1 to 35 (MKSFNTEGHNHSTAESGDAYTVSDPTKNVDEDGRE) is disordered. At 1–40 (MKSFNTEGHNHSTAESGDAYTVSDPTKNVDEDGREKRTGT) the chain is on the cytoplasmic side. 2 helical membrane passes run 41 to 61 (WLTA…LSLA) and 62 to 82 (WAIA…FSFI). Residues 83–129 (TYFTSTMLADCYRAPDPVTGKRNYTYMDVVRSYLGGRKVQLCGVAQY) are Cytoplasmic-facing. A helical membrane pass occupies residues 130 to 150 (GNLIGVTVGYTITASISLVAV). The Extracellular portion of the chain corresponds to 151–166 (GKSNCFHDKGHTADCT). The chain crosses the membrane as a helical span at residues 167–187 (ISNYPYMAVFGIIQVILSQIP). At 188–194 (NFHKLSF) the chain is on the cytoplasmic side. A helical transmembrane segment spans residues 195-215 (LSIMAAVMSFTYATIGIGLAI). The Extracellular portion of the chain corresponds to 216-245 (ATVAGGKVGKTSMTGTAVGVDVTAAQKIWR). A helical transmembrane segment spans residues 246-266 (SFQAVGDIAFAYAYATVLIEI). Residues 267–285 (QDTLRSSPAENKAMKRASL) are Cytoplasmic-facing. Residues 286-306 (VGVSTTTFFYILCGCIGYAAF) form a helical membrane-spanning segment. The Extracellular segment spans residues 307–318 (GNNAPGDFLTDF). The helical transmembrane segment at 319-339 (GFFEPFWLIDFANACIAVHLI) threads the bilayer. The Cytoplasmic portion of the chain corresponds to 340–394 (GAYQVFAQPIFQFVEKKCNRNYPDNKFITSEYSVNVPFLGKFNISLFRLVWRTAY). 2 helical membrane passes run 395-415 (VVIT…LGLI) and 416-436 (GAAS…IAQT). Topologically, residues 437–450 (KIKKYSARWIALKT) are cytoplasmic. A helical transmembrane segment spans residues 451-471 (MCYVCLIVSLLAAAGSIAGLI). The Extracellular portion of the chain corresponds to 472–485 (SSVKTYKPFRTMHE).

Belongs to the amino acid/polyamine transporter 2 family. Amino acid/auxin permease (AAAP) (TC 2.A.18.2) subfamily. Highly expressed in developing pods. Found in the endosperm and in the storage parenchyma and the outer epidermis cells of the developing embryo. Lower levels of expression in flowers, in the vascular system of the cotyledon and in the root epidermal cells, including root hairs and throughout the root tip.

It localises to the cell membrane. With respect to regulation, inhibited by carbonylcyanide m-chlorophenylhydrazone and diethylpyrocarbonate (DEPC). Amino acid-proton symporter. Stereospecific transporter with a broad specificity for histidine, glutamate and neutral amino acids. Reduced affinities for asparagine and valine. Involved in amino acid uptake from the apoplastic cavity into the embryo cells for storage protein accumulation and in root amino acid uptake. In Arabidopsis thaliana (Mouse-ear cress), this protein is Amino acid permease 1 (AAP1).